Reading from the N-terminus, the 515-residue chain is Leucine-rich repeat transmembrane neuronal protein 2 (515 aa).

An N-terminal signal peptide occupies residues 1–33; the sequence is MGLHFKWPLGAPMLAAIYAMSVVLKMLPALGMA. The Extracellular segment spans residues 34-421; that stretch reads CPPKCRCEKL…EPDNAIFTQR (388 aa). N57 is a glycosylation site (N-linked (GlcNAc...) asparagine). LRR repeat units lie at residues 61–83, 84–107, 109–131, 132–155, 156–179, 181–203, 205–227, 229–251, 252–275, and 276–299; these read KGSL…QFAS, FSQL…AFQG, YKLK…TFTQ, LINL…LFYG, LRKL…LFWD, RSLE…GFAG, IKLR…HFLR, SSLH…MEWT, WSTL…VFET, and MPNL…ILSS. N-linked (GlcNAc...) asparagine glycosylation is present at N126. N-linked (GlcNAc...) asparagine glycosylation is present at N243. An N-linked (GlcNAc...) asparagine glycan is attached at N362. The helical transmembrane segment at 422–442 threads the bilayer; sequence VITGTMALLFSFFFIIFIVFI. At 443 to 515 the chain is on the cytoplasmic side; it reads SRKCCPPTLR…QQLPYKECEV (73 aa). The Involved in DLG4-binding signature appears at 512–515; sequence ECEV.

This sequence belongs to the LRRTM family. As to quaternary structure, interacts with DLG4. Interacts with neurexin NRXN1; interaction is mediated by heparan sulfate glycan modification on neurexin. In terms of tissue distribution, expressed in neuronal tissues. Widely distributed in neuropil regions in discrete puncta throughout the brain (at protein level). Detected in cortex, thalamus, striatum, olfactory bulb, cerebellum and all hippocampal subfields (at protein level). More abundant in deep than in superficial layers of neocortex (at protein level).

It localises to the cell membrane. Its subcellular location is the postsynaptic cell membrane. Its function is as follows. Involved in the development and maintenance of excitatory synapses in the nervous system. Regulates surface expression of AMPA receptors and instructs the development of functional glutamate release sites. Acts as a ligand for the presynaptic receptors NRXN1-A and NRXN1-B. The sequence is that of Leucine-rich repeat transmembrane neuronal protein 2 (Lrrtm2) from Rattus norvegicus (Rat).